The chain runs to 282 residues: Aldo-keto reductase MUL_1987 (282 aa).

Tyr57 functions as the Proton donor in the catalytic mechanism. NADPH is bound by residues Leu197, Ile235, Ser238, Thr246, Asn247, and Arg273.

It belongs to the aldo/keto reductase family.

The sequence is that of Aldo-keto reductase MUL_1987 from Mycobacterium ulcerans (strain Agy99).